The sequence spans 144 residues: Large ribosomal subunit protein uL11 (144 aa).

The protein belongs to the universal ribosomal protein uL11 family. In terms of assembly, part of the ribosomal stalk of the 50S ribosomal subunit. Interacts with L10 and the large rRNA to form the base of the stalk. L10 forms an elongated spine to which L12 dimers bind in a sequential fashion forming a multimeric L10(L12)X complex. Post-translationally, one or more lysine residues are methylated.

Its function is as follows. Forms part of the ribosomal stalk which helps the ribosome interact with GTP-bound translation factors. This is Large ribosomal subunit protein uL11 from Marinomonas sp. (strain MWYL1).